The following is a 198-amino-acid chain: Cerebellin-4 (198 aa).

A signal peptide spans 1-24; sequence MGSARRALSVVPAVLLILVLPVWA. Asparagine 26 and asparagine 85 each carry an N-linked (GlcNAc...) asparagine glycan. Positions 63-198 constitute a C1q domain; the sequence is AANSKVAFSA…TFSGFLVFPL (136 aa).

Homohexamer; disulfide-linked homotrimers. The trimers are assembled via the globular C1q domains. The trimers associate via N-terminal cysteine residues to form disulfide-linked hexamers. May form oligomers with CBLN1, CBLN2 and CBLN3 prior to secretion. Once secreted, does not interact with other CBLN family members. Strongly interacts with DCC in a NTN1-displaceable fashion. Weakly binds to NRXN1 and NRXN2 long and short isoforms produced by alternative promoter usage. Interaction with NRXN3 short isoform is hardly detectable; no interaction at all with NRXN3 long isoform. Does not interact with NEO1, GRID1 and GRID2. In terms of processing, sialoglycoprotein. Expressed in brain with high levels in particular thalamic nuclei. In the thalamus, predominantly expressed in neurons within the parafascicular nucleus. Found in the hippocampus, mostly in the dendrites and somata of pyramidal neurons (at protein level). Very low or no expression in most other brain regions. Highly expressed in the ventral medial habenula.

The protein resides in the secreted. It localises to the synapse. In terms of biological role, acts as a synaptic organizer in specific subsets of neurons in the brain. Essential for the formation and maintenance of inhibitory GABAergic synapses. Promotes the development of dendrite-targeting inhibitory GABAergic synapses made by somatostatin-positive interneurons. May contribute to the function of ventral medial habenula region of the brain implicated in the regulation of anxiety-related behaviors. May play a role in CBLN3 export from the endoplasmic reticulum and secretion. The sequence is that of Cerebellin-4 (Cbln4) from Mus musculus (Mouse).